The primary structure comprises 447 residues: Argininosuccinate synthase (447 aa).

Residues 20–28 and Ala46 each bind ATP; that span reads AFSGGLDTS. L-citrulline is bound at residue Tyr102. ATP contacts are provided by Gly132 and Thr134. L-aspartate contacts are provided by Thr134, Asn138, and Asp139. Residue Asn138 participates in L-citrulline binding. ATP is bound at residue Asp139. Residues Arg142 and Ser195 each coordinate L-citrulline. Asp197 contacts ATP. 3 residues coordinate L-citrulline: Thr204, Glu206, and Glu283.

It belongs to the argininosuccinate synthase family. Type 2 subfamily. In terms of assembly, homotetramer.

It is found in the cytoplasm. The enzyme catalyses L-citrulline + L-aspartate + ATP = 2-(N(omega)-L-arginino)succinate + AMP + diphosphate + H(+). Its pathway is amino-acid biosynthesis; L-arginine biosynthesis; L-arginine from L-ornithine and carbamoyl phosphate: step 2/3. This is Argininosuccinate synthase from Neisseria meningitidis serogroup C (strain 053442).